The primary structure comprises 397 residues: Acetate kinase (397 aa).

Asn-7 contributes to the Mg(2+) binding site. An ATP-binding site is contributed by Lys-14. Arg-90 lines the substrate pocket. Asp-147 (proton donor/acceptor) is an active-site residue. Residues 207 to 211 (HLGNG), 282 to 284 (DFR), and 330 to 334 (GLGEN) each bind ATP. Position 383 (Glu-383) interacts with Mg(2+).

It belongs to the acetokinase family. In terms of assembly, homodimer. Mg(2+) is required as a cofactor. The cofactor is Mn(2+).

Its subcellular location is the cytoplasm. It catalyses the reaction acetate + ATP = acetyl phosphate + ADP. It participates in metabolic intermediate biosynthesis; acetyl-CoA biosynthesis; acetyl-CoA from acetate: step 1/2. Catalyzes the formation of acetyl phosphate from acetate and ATP. Can also catalyze the reverse reaction. In Clostridium botulinum (strain Loch Maree / Type A3), this protein is Acetate kinase.